The following is a 640-amino-acid chain: MPIITLPDGSEKNYESSVTIEKIATDIGPGLAKAALAGRVNGNLLDTCIPITNDAEIQIITSKDNEGLEIIRHSFAHLLGHAVKQLYPEAKMAIGPVIEDGFYYDISYKDTFTPVDLEKIEKRIKELINKDYDVDVEVVSPAKATQVFSERGEVFKLDIIKNIPKDEIIKLYKHEEYIDMCRGPHVPNTRHLRAFKLMKVSGAYWRGDSNNEMLQRIYGTAWKNSKELKEYINRIEEAEKRDHRKLGKKLSLFHFQEEAPGMIFWHPNGWTIYRVLQDFIRETISKYDYQELKSPQIVCRSLWEKSGHWDKFKEDMFTTTSENKEYAIKPMNCPCHVQVFNQGLKSYRDLPIRLSEFGSCHRNEPSGALHGLMRVRNFVQDDGHIFCTNEQIQEEVQSFIDLVFEVYKAFGFNSILIKLSTRPEKRVGSDDVWDKSEKALSDALDSKGLDWSLLPGEGAFYGPKIEFSLKDCLNRVWQCGTIQVDFSMPERLNSSYIDVDGKKQPPVMLHRAILGSFERFIGILIENYSGNLPIWLCPLQIVVMGITDRNNDACLDTKSKLIKYGFRASVDTRNEKVGFKIREHTMQRIPFLIIIGDKEEENNEISVRTREGKDLGKMTLDKFKVIMDESISKKSLVESK.

Positions 1-61 (MPIITLPDGS…TNDAEIQIIT (61 aa)) constitute a TGS domain. Positions 242-533 (DHRKLGKKLS…LIENYSGNLP (292 aa)) are catalytic. 3 residues coordinate Zn(2+): C333, H384, and H510.

Belongs to the class-II aminoacyl-tRNA synthetase family. As to quaternary structure, homodimer. Zn(2+) serves as cofactor.

It localises to the cytoplasm. It carries out the reaction tRNA(Thr) + L-threonine + ATP = L-threonyl-tRNA(Thr) + AMP + diphosphate + H(+). Catalyzes the attachment of threonine to tRNA(Thr) in a two-step reaction: L-threonine is first activated by ATP to form Thr-AMP and then transferred to the acceptor end of tRNA(Thr). Also edits incorrectly charged L-seryl-tRNA(Thr). This chain is Threonine--tRNA ligase, found in Prochlorococcus marinus (strain NATL1A).